Consider the following 56-residue polypeptide: Large ribosomal subunit protein bL32 (56 aa).

The interval 1 to 28 (MAVQQNRKTRSKRGMRRSHDALTTAALS) is disordered. The segment covering 7–16 (RKTRSKRGMR) has biased composition (basic residues).

This sequence belongs to the bacterial ribosomal protein bL32 family.

The chain is Large ribosomal subunit protein bL32 from Vibrio vulnificus (strain CMCP6).